Here is a 307-residue protein sequence, read N- to C-terminus: tRNA pseudouridine synthase B (307 aa).

Catalysis depends on aspartate 48, which acts as the Nucleophile.

Belongs to the pseudouridine synthase TruB family. Type 1 subfamily.

It carries out the reaction uridine(55) in tRNA = pseudouridine(55) in tRNA. Responsible for synthesis of pseudouridine from uracil-55 in the psi GC loop of transfer RNAs. In Neisseria meningitidis serogroup B (strain ATCC BAA-335 / MC58), this protein is tRNA pseudouridine synthase B.